We begin with the raw amino-acid sequence, 538 residues long: MFS-type transporter tndD (538 aa).

The disordered stretch occupies residues 1–42 (MSLSGSDSHLAVSPTLAEDMNSSDTSAGLAETPPADEEKRSI). 2 N-linked (GlcNAc...) asparagine glycosylation sites follow: Asn-21 and Asn-71. 11 helical membrane-spanning segments follow: residues 81 to 101 (VGIV…FAPG), 115 to 135 (LLAG…PLIL), 153 to 173 (ICFT…MLIA), 203 to 223 (GGVI…GPVA), 235 to 255 (WVFW…FLFL), 309 to 329 (PIVA…YLMF), 348 to 368 (GLTF…IGAV), 394 to 414 (LPPL…YGWS), 422 to 442 (IVPI…FMCI), 444 to 464 (SYLV…NTVV), and 485 to 505 (LGWG…IPWA).

It belongs to the major facilitator superfamily.

It localises to the membrane. Functionally, MFS-type transporter; part of the gene cluster that mediates the biosynthesis of talaronoid C, a fusicoccane diterpenoid with an unprecedented tricyclic 5/8/6 ring system. The sequence is that of MFS-type transporter tndD from Aspergillus flavipes.